Here is a 70-residue protein sequence, read N- to C-terminus: Melittin (70 aa).

The first 21 residues, 1 to 21 (MKFLVNVALVFMVVYISFIYA), serve as a signal peptide directing secretion. Residues 22 to 43 (APEPEPAPEAEAEADAEADPEA) constitute a propeptide, removed by a dipeptidylpeptidase. Position 44 is an N-formylglycine; partial (Gly-44). A Glutamine amide modification is found at Gln-69.

The protein belongs to the melittin family. As to quaternary structure, monomer (in solution and for integration into membranes), homotetramer (in solution and potentially as a toroidal pore in membranes), and potenially homomultimer (as a toroidal pore in membranes). Expressed by the venom gland.

The protein resides in the secreted. It is found in the target cell membrane. In terms of biological role, main toxin of bee venom with strong hemolytic activity and antimicrobial activity. It has enhancing effects on bee venom phospholipase A2 activity. This amphipathic toxin binds to negatively charged membrane surface and forms pore by inserting into lipid bilayers inducing the leakage of ions and molecules and the enhancement of permeability that ultimately leads to cell lysis. It acts as a voltage-gated pore with higher selectivity for anions over cations. The ion conductance has been shown to be voltage-dependent. Self-association of melittin in membranes is promoted by high ionic strength, but not by the presence of negatively charged lipids. In vivo, intradermal injection into healthy human volunteers produce sharp pain sensation and an inflammatory response. It produces pain by activating primary nociceptor cells directly and indirectly due to its ability to activate plasma membrane phospholipase A2 and its pore-forming activity. This Apis cerana cerana (Oriental honeybee) protein is Melittin (MELT).